The primary structure comprises 82 residues: Small ribosomal subunit protein bS16 (82 aa).

This sequence belongs to the bacterial ribosomal protein bS16 family.

The polypeptide is Small ribosomal subunit protein bS16 (Mannheimia succiniciproducens (strain KCTC 0769BP / MBEL55E)).